A 733-amino-acid chain; its full sequence is Ribosomal protein S6 kinase alpha-2 (733 aa).

A Protein kinase 1 domain is found at Phe59–Phe318. Residues Leu65–Val73 and Lys91 each bind ATP. Asp184 (proton acceptor) is an active-site residue. Residue Ser218 is modified to Phosphoserine; by PDPK1. Residues Val319 to Ser388 form the AGC-kinase C-terminal domain. Ser377 is subject to Phosphoserine. Residues Tyr415 to Val672 form the Protein kinase 2 domain. Residues Ile421–Cys429 and Lys444 contribute to the ATP site. Asp532 functions as the Proton acceptor in the catalytic mechanism.

It belongs to the protein kinase superfamily. AGC Ser/Thr protein kinase family. S6 kinase subfamily. In terms of assembly, forms a complex with either MAPK1/ERK2 or MAPK3/ERK1 in quiescent cells. Transiently dissociates following mitogenic stimulation. Interacts with FBXO5; cooperate to induce the metaphase arrest of early blastomeres; increases and stabilizes interaction of FBXO5 with CDC20. The cofactor is Mg(2+). Post-translationally, activated by phosphorylation at Ser-218 by PDPK1. Autophosphorylated on Ser-377, as part of the activation process. May be phosphorylated at Thr-356 and Ser-360 by MAPK1/ERK2 and MAPK3/ERK1. N-terminal myristoylation results in an activated kinase in the absence of added growth factors. Widely expressed with higher expression in lung, skeletal muscle, brain, uterus, ovary, thyroid and prostate.

The protein resides in the nucleus. It is found in the cytoplasm. It carries out the reaction L-seryl-[protein] + ATP = O-phospho-L-seryl-[protein] + ADP + H(+). The enzyme catalyses L-threonyl-[protein] + ATP = O-phospho-L-threonyl-[protein] + ADP + H(+). Its activity is regulated as follows. Upon extracellular signal or mitogen stimulation, phosphorylated at Thr-570 in the C-terminal kinase domain (CTKD) by MAPK1/ERK2 and MAPK3/ERK1. The activated CTKD then autophosphorylates Ser-377, allowing binding of PDPK1, which in turn phosphorylates Ser-218 in the N-terminal kinase domain (NTDK) leading to the full activation of the protein and subsequent phosphorylation of the substrates by the NTKD. In terms of biological role, serine/threonine-protein kinase that acts downstream of ERK (MAPK1/ERK2 and MAPK3/ERK1) signaling and mediates mitogenic and stress-induced activation of transcription factors, regulates translation, and mediates cellular proliferation, survival, and differentiation. May function as tumor suppressor in epithelial ovarian cancer cells. This chain is Ribosomal protein S6 kinase alpha-2 (RPS6KA2), found in Homo sapiens (Human).